The sequence spans 126 residues: Protein ApaG (126 aa).

In terms of domain architecture, ApaG spans Ser2–His126.

The sequence is that of Protein ApaG from Pseudomonas entomophila (strain L48).